Here is a 179-residue protein sequence, read N- to C-terminus: Large ribosomal subunit protein uL5 (179 aa).

It belongs to the universal ribosomal protein uL5 family. In terms of assembly, part of the 50S ribosomal subunit; part of the 5S rRNA/L5/L18/L25 subcomplex. Contacts the 5S rRNA and the P site tRNA. Forms a bridge to the 30S subunit in the 70S ribosome.

This is one of the proteins that bind and probably mediate the attachment of the 5S RNA into the large ribosomal subunit, where it forms part of the central protuberance. In the 70S ribosome it contacts protein S13 of the 30S subunit (bridge B1b), connecting the 2 subunits; this bridge is implicated in subunit movement. Contacts the P site tRNA; the 5S rRNA and some of its associated proteins might help stabilize positioning of ribosome-bound tRNAs. This is Large ribosomal subunit protein uL5 from Pseudomonas syringae pv. tomato (strain ATCC BAA-871 / DC3000).